The sequence spans 187 residues: Transcriptional repressor NrdR (187 aa).

A disordered region spans residues 1-21 (MQCPYCQHTNSRVLESRSSEG). The segment at 3-34 (CPYCQHTNSRVLESRSSEGGQSIRRRRECLNC) is a zinc-finger region. In terms of domain architecture, ATP-cone spans 49 to 139 (ITVIKHDGKK…VYGRFKGIKD (91 aa)). 2 stretches are compositionally biased toward polar residues: residues 152–162 (ISSPMSQWSKS) and 170–187 (SQTS…ENSR). A disordered region spans residues 152-187 (ISSPMSQWSKSSTRDRDQSQTSPCLSLTHNGSENSR).

It belongs to the NrdR family. Zn(2+) is required as a cofactor.

Functionally, negatively regulates transcription of bacterial ribonucleotide reductase nrd genes and operons by binding to NrdR-boxes. In Crocosphaera subtropica (strain ATCC 51142 / BH68) (Cyanothece sp. (strain ATCC 51142)), this protein is Transcriptional repressor NrdR.